The primary structure comprises 511 residues: Phenylalanine--tRNA ligase alpha subunit (511 aa).

Residues Thr352, 390 to 392 (QVE), Tyr429, and Phe455 each bind L-phenylalanine.

The protein belongs to the class-II aminoacyl-tRNA synthetase family. Phe-tRNA synthetase alpha subunit type 2 subfamily. In terms of assembly, tetramer of two alpha and two beta subunits. Mg(2+) is required as a cofactor.

The protein resides in the cytoplasm. It catalyses the reaction tRNA(Phe) + L-phenylalanine + ATP = L-phenylalanyl-tRNA(Phe) + AMP + diphosphate + H(+). The sequence is that of Phenylalanine--tRNA ligase alpha subunit from Methanothermobacter thermautotrophicus (strain ATCC 29096 / DSM 1053 / JCM 10044 / NBRC 100330 / Delta H) (Methanobacterium thermoautotrophicum).